We begin with the raw amino-acid sequence, 310 residues long: MPHDIPVGRSVTVRVPASSANLGPGFDTLGLAVGLYDIVTVEVTASGLTVDVQGEGAGEVPLDGTHLVVRAIREGLRVAHADVPGLAVSCENAIPQSRGLGSSAAAAAAGVCAANALADNALTTDQVIQVVSSFEGHPDNAAASVLGGAVVSWTDTPVDGETAPQYHAIGVDVHPDIRATAFIPDFTASTNAVRRVLPSDVSHVDARFNVSRTAVMTVALRTNPELLWEGTRDRLHQPYRADALSVSAEWVNRLRNRGYAAYLSGAGPTIMVLSTEDLPAEIVDTASSEGLRVITLPIAGPIQVNRKELG.

Residue 95–105 (PQSRGLGSSAA) participates in ATP binding.

It belongs to the GHMP kinase family. Homoserine kinase subfamily.

It localises to the cytoplasm. The catalysed reaction is L-homoserine + ATP = O-phospho-L-homoserine + ADP + H(+). The protein operates within amino-acid biosynthesis; L-threonine biosynthesis; L-threonine from L-aspartate: step 4/5. Functionally, catalyzes the ATP-dependent phosphorylation of L-homoserine to L-homoserine phosphate. This Corynebacterium kroppenstedtii (strain DSM 44385 / JCM 11950 / CIP 105744 / CCUG 35717) protein is Homoserine kinase.